Reading from the N-terminus, the 542-residue chain is TNF receptor-associated factor 6 (542 aa).

The segment at 1–374 is interaction with TAX1BP1; sequence MSLLHCENSC…EAQQCNGIYI (374 aa). An RING-type; degenerate zinc finger spans residues 71–110; it reads CPICLMALREAVQTPCGHRFCKACIIKSIRDAGHKCPVDN. Residue Lys125 forms a Glycyl lysine isopeptide (Lys-Gly) (interchain with G-Cter in SUMO); alternate linkage. Lys125 participates in a covalent cross-link: Glycyl lysine isopeptide (Lys-Gly) (interchain with G-Cter in ubiquitin); alternate. A Glycyl lysine isopeptide (Lys-Gly) (interchain with G-Cter in SUMO) cross-link involves residue Lys143. 2 consecutive TRAF-type zinc fingers follow at residues 151–203 and 204–260; these read EHQA…EDKE and IHEQ…NHLA. A coiled-coil region spans residues 310–368; that stretch reads SEVHNFQETIQQLEGRLVRQDHQIRELTAKMETQSMYVNELKRTIRTLEDKVAEIEAQQ. A Glycyl lysine isopeptide (Lys-Gly) (interchain with G-Cter in ubiquitin) cross-link involves residue Lys339. Positions 370-519 constitute an MATH domain; the sequence is NGIYIWKIGN…DDTLLVRCEV (150 aa). The segment at 375-542 is interaction with TANK; the sequence is WKIGNFGMHL…FQPRSTDSGI (168 aa). Residue Lys473 forms a Glycyl lysine isopeptide (Lys-Gly) (interchain with G-Cter in SUMO) linkage.

It belongs to the TNF receptor-associated factor family. A subfamily. Homotrimer. Homooligomer. N-terminal region is dimeric while C-terminal region is trimeric; maybe providing a mode of oligomerization. Upon IL1B treatment, forms a complex with PELI1, IRAK1, IRAK4 and MYD88; this complex recruits MAP3K7/TAK1, TAB1 and TAB2 to mediate NF-kappa-B activation. Direct binding of SMAD6 to PELI1 prevents the complex formation and hence negatively regulates IL1R-TLR signaling and eventually NF-kappa-B-mediated gene expression. Binds to TNFRSF5/CD40 and TNFRSF11A/RANK. Associates with NGFR, TNFRSF17, IRAK2, IRAK3, RIPK2, MAP3K1, MAP3K5, MAP3K14, CSK, TRAF, TRAF-interacting protein TRIP and TNF receptor associated protein TDP2. Interacts with IL17R. Interacts with SQSTM1 bridging NTRK1 and NGFR. Forms a ternary complex with SQSTM1 and PRKCZ. Interacts with PELI2 and PELI3. Binds UBE2V1. Interacts with TAX1BP1; this interaction mediates deubiquitination of TRAF6 and inhibition of NF-kappa-B activation. Interacts with ZNF675. Interacts with ARRB1 and ARRB2. Interacts with MAP3K7 and TAB1/MAP3K7IP1; during IL-1 signaling. Interacts with UBE2N. Interacts with TGFBR1, HDAC1 and RANGAP1. Interacts with AKT1, AKT2 and AKT3. Interacts (via TRAF domains) with NUMBL (via C-terminal). Interacts with RBCK1. Interacts with LIMD1 (via LIM domains). Interacts with RSAD2/viperin. Interacts (via C-terminus) with EIF2AK2/PKR (via the kinase catalytic domain). Interacts with ZFAND5. Interacts with IL1RL1. Interacts with TRAFD1. Interacts with AJUBA. Interacts with MAVS/IPS1. Interacts (via TRAF domains) with DYNC2I2 (via WD domains). Interacts with IFIT3 (via N-terminus). Interacts with TICAM2. Interacts with CARD14. Interacts with CD40 and MAP3K8; the interaction is required for ERK activation. Interacts with TICAM1 and this interaction is enhanced in the presence of WDFY1. Interacts with TANK; this interaction increases in response to DNA damage. Interacts with USP10; this interaction increases in response to DNA damage. Interacts with ZC3H12A; this interaction increases in response to DNA damage and is stimulated by TANK. Interacts with WDFY3. Interacts with TRIM13. Interacts with GPS2. Interacts (via C-terminus) with SASH1. Interacts with LRRC19. Interacts with IL17RA and TRAF3IP2. Interacts with TOMM70. Interacts with AMBRA1; interaction is required to mediate 'Lys-63'-linked ubiquitination of ULK1. Interacts with CRBN; this interaction inhibits TLR4-mediated signaling by preventing TRAF6-mediated ubiquitination of ECSIT. Sumoylated on Lys-125, Lys-143 and Lys-473 with SUMO1. Post-translationally, polyubiquitinated on Lys-125 by TRAF3IP2; after cell stimulation with IL17A. Polyubiquitinated on Lys-125; after cell stimulation with IL1B or TGFB. This ligand-induced cell stimulation leads to dimerization/oligomerization of TRAF6 molecules, followed by auto-ubiquitination which involves UBE2N and UBE2V1 and leads to TRAF6 activation. This 'Lys-63' site-specific poly-ubiquitination appears to be associated with the activation of signaling molecules. Endogenous autoubiquitination occurs only for the cytoplasmic form. Deubiquitinated by USP10 in a TANK-dependent manner, leading to the negative regulation of NF-kappa-B signaling upon DNA damage. LRRC19 induces 'Lys-63' ubiquitination. Ubiquitinated at Lys-339 by the SCF(FBXL2) complex, leading to its degradation by the proteasome.

The protein resides in the cytoplasm. The protein localises to the cell cortex. It is found in the nucleus. Its subcellular location is the lipid droplet. It carries out the reaction S-ubiquitinyl-[E2 ubiquitin-conjugating enzyme]-L-cysteine + [acceptor protein]-L-lysine = [E2 ubiquitin-conjugating enzyme]-L-cysteine + N(6)-ubiquitinyl-[acceptor protein]-L-lysine.. The protein operates within protein modification; protein ubiquitination. In terms of biological role, E3 ubiquitin ligase that, together with UBE2N and UBE2V1, mediates the synthesis of 'Lys-63'-linked-polyubiquitin chains conjugated to proteins, such as ECSIT, IKBKG, IRAK1, AKT1 and AKT2. Also mediates ubiquitination of free/unanchored polyubiquitin chain that leads to MAP3K7 activation. Leads to the activation of NF-kappa-B and JUN. Seems to also play a role in dendritic cells (DCs) maturation and/or activation. Represses c-Myb-mediated transactivation, in B-lymphocytes. Adapter protein that seems to play a role in signal transduction initiated via TNF receptor, IL-1 receptor and IL-17 receptor. Regulates osteoclast differentiation by mediating the activation of adapter protein complex 1 (AP-1) and NF-kappa-B, in response to RANK-L stimulation. Together with MAP3K8, mediates CD40 signals that activate ERK in B-cells and macrophages, and thus may play a role in the regulation of immunoglobulin production. Acts as a regulator of the JNK and NF-kappa-B signaling pathways by initiating assembly of heterotypic 'Lys-63'-/'Lys-48'-linked branched ubiquitin chains that are then recognized by TAB2: TRAF6 catalyzes initial 'Lys-63'-linked-polyubiquitin chains that are then branched via 'Lys-48'-linked polyubiquitin by HUWE1. 'Lys-63'-/'Lys-48'-linked branched ubiquitin chains protect 'Lys-63'-linkages from CYLD deubiquitination. Also participates in the TCR signaling by ubiquitinating LAT. The sequence is that of TNF receptor-associated factor 6 (TRAF6) from Bos taurus (Bovine).